The chain runs to 32 residues: ilv operon leader peptide (32 aa).

The chain is ilv operon leader peptide (ilvL) from Yersinia pestis.